Here is a 586-residue protein sequence, read N- to C-terminus: uncharacterized protein (586 aa).

This is an uncharacterized protein from Saccharomyces cerevisiae (strain ATCC 204508 / S288c) (Baker's yeast).